We begin with the raw amino-acid sequence, 305 residues long: Probable pyridoxal 5'-phosphate synthase subunit pdx1 (305 aa).

D-ribose 5-phosphate is bound at residue Asp-33. Catalysis depends on Lys-90, which acts as the Schiff-base intermediate with D-ribose 5-phosphate. Residue Gly-162 coordinates D-ribose 5-phosphate. Residue Arg-174 participates in D-glyceraldehyde 3-phosphate binding. D-ribose 5-phosphate is bound by residues Gly-223 and 244 to 245 (GS).

Belongs to the PdxS/SNZ family. In terms of assembly, homohexamer.

The catalysed reaction is aldehydo-D-ribose 5-phosphate + D-glyceraldehyde 3-phosphate + L-glutamine = pyridoxal 5'-phosphate + L-glutamate + phosphate + 3 H2O + H(+). It participates in cofactor biosynthesis; pyridoxal 5'-phosphate biosynthesis. In terms of biological role, catalyzes the formation of pyridoxal 5'-phosphate from ribose 5-phosphate (RBP), glyceraldehyde 3-phosphate (G3P) and ammonia. The ammonia is provided by pdx2. Can also use ribulose 5-phosphate and dihydroxyacetone phosphate as substrates, resulting from enzyme-catalyzed isomerization of RBP and G3P, respectively. The chain is Probable pyridoxal 5'-phosphate synthase subunit pdx1 (pdx1) from Dictyostelium discoideum (Social amoeba).